Reading from the N-terminus, the 609-residue chain is Carotenoid cleavage dioxygenase 7, chloroplastic (609 aa).

The N-terminal 34 residues, 1 to 34, are a transit peptide targeting the chloroplast; the sequence is MATQAIAPMHAAVVHRHHVLPPRRCVRRRGVFVR. Positions 263, 316, 394, and 603 each coordinate Fe cation.

The protein belongs to the carotenoid oxygenase family. Fe(2+) is required as a cofactor. As to expression, expressed in vascular bundles of roots, leaves, stems and panicles.

Its subcellular location is the plastid. The protein localises to the chloroplast. It carries out the reaction 9-cis-beta-carotene + O2 = 9-cis-10'-apo-beta-carotenal + beta-ionone. Its function is as follows. Involved in strigolactones biosynthesis by cleaving asymmetrically a variety of linear and cyclic carotenoids at the 9-10 double bond. Produces one C(13) beta-ionone and the C(27) 10'-apo-beta-carotenal. Strigolactones are hormones that inhibit tillering and shoot branching through the MAX-dependent pathway, contribute to the regulation of shoot architectural response to phosphate-limiting conditions and function as rhizosphere signal that stimulates hyphal branching of arbuscular mycorrhizal fungi and trigger seed germination of root parasitic weeds. Can rescue the phenotype in the Arabidopsis max3 mutant. This is Carotenoid cleavage dioxygenase 7, chloroplastic (CCD7) from Oryza sativa subsp. japonica (Rice).